The sequence spans 286 residues: MAGAKEIRSKIASIKSTQKITSAMEKVAVSKMRKAQMRMAASRPYAERIRQVIGHLANANPEYRHPFMIERPVKRAGYIVVSSDRGLCGGLNTNLFKALVKDMNVNREQGVEIDLCVIGSKGATFFRIFGGNVVAAISHLGEEPSINDLIGSVKVMLDAYLDGRIDRLSVVSNKFVNTMTQTPTVEQLVPLVATPDQELKHHWDYLYEPDAKELLDGLMVRYVESQVYQAVVENNAAEQAARMIAMKNATDNAGDLISELQLIYNKARQAAITQEISEIVGGAAAV.

This sequence belongs to the ATPase gamma chain family. F-type ATPases have 2 components, CF(1) - the catalytic core - and CF(0) - the membrane proton channel. CF(1) has five subunits: alpha(3), beta(3), gamma(1), delta(1), epsilon(1). CF(0) has three main subunits: a, b and c.

It localises to the cell inner membrane. Functionally, produces ATP from ADP in the presence of a proton gradient across the membrane. The gamma chain is believed to be important in regulating ATPase activity and the flow of protons through the CF(0) complex. This is ATP synthase gamma chain from Pseudomonas putida (strain W619).